A 479-amino-acid polypeptide reads, in one-letter code: Aspartyl/glutamyl-tRNA(Asn/Gln) amidotransferase subunit B (479 aa).

The protein belongs to the GatB/GatE family. GatB subfamily. In terms of assembly, heterotrimer of A, B and C subunits.

The catalysed reaction is L-glutamyl-tRNA(Gln) + L-glutamine + ATP + H2O = L-glutaminyl-tRNA(Gln) + L-glutamate + ADP + phosphate + H(+). It carries out the reaction L-aspartyl-tRNA(Asn) + L-glutamine + ATP + H2O = L-asparaginyl-tRNA(Asn) + L-glutamate + ADP + phosphate + 2 H(+). Functionally, allows the formation of correctly charged Asn-tRNA(Asn) or Gln-tRNA(Gln) through the transamidation of misacylated Asp-tRNA(Asn) or Glu-tRNA(Gln) in organisms which lack either or both of asparaginyl-tRNA or glutaminyl-tRNA synthetases. The reaction takes place in the presence of glutamine and ATP through an activated phospho-Asp-tRNA(Asn) or phospho-Glu-tRNA(Gln). This is Aspartyl/glutamyl-tRNA(Asn/Gln) amidotransferase subunit B from Alcanivorax borkumensis (strain ATCC 700651 / DSM 11573 / NCIMB 13689 / SK2).